The primary structure comprises 547 residues: Putative laccase-5 (547 aa).

The N-terminal stretch at 1–35 is a signal peptide; it reads MGTPRGLRNAGSSSSACRFLAAFAVLLALPTLTAG. 2 Plastocyanin-like domains span residues 43-159 and 170-323; these read NVQM…PKRG and ELPP…YAPT. N48 and N89 each carry an N-linked (GlcNAc...) asparagine glycan. Residues H93, H95, H138, and H140 each contribute to the Cu cation site. N199, N215, N251, N311, N342, N349, N388, N395, N405, and N430 each carry an N-linked (GlcNAc...) asparagine glycan. Positions 408–531 constitute a Plastocyanin-like 3 domain; that stretch reads FVRPRVALLE…SMAWLVNDGP (124 aa). 7 residues coordinate Cu cation: H448, H451, H453, H510, C511, H512, and H516.

The protein belongs to the multicopper oxidase family. It depends on Cu cation as a cofactor.

The protein resides in the secreted. The protein localises to the extracellular space. It is found in the apoplast. It catalyses the reaction 4 hydroquinone + O2 = 4 benzosemiquinone + 2 H2O. Lignin degradation and detoxification of lignin-derived products. This chain is Putative laccase-5 (LAC5), found in Oryza sativa subsp. japonica (Rice).